We begin with the raw amino-acid sequence, 203 residues long: Chemotactic transduction protein ChpE (203 aa).

Transmembrane regions (helical) follow at residues 3-23 (AIFL…GAVF), 46-66 (LIGD…LLGY), 69-89 (VRIP…VQGL), 123-143 (NVVY…GTPN), and 149-169 (VFFA…AALV).

Belongs to the Rht family.

It localises to the cell membrane. This Pseudomonas aeruginosa (strain ATCC 15692 / DSM 22644 / CIP 104116 / JCM 14847 / LMG 12228 / 1C / PRS 101 / PAO1) protein is Chemotactic transduction protein ChpE (chpE).